A 356-amino-acid chain; its full sequence is Fe(3+) ions import ATP-binding protein FbpC 2 (356 aa).

Residues 12–246 (LTVKNLNKFF…PNHLETAKFM (235 aa)) enclose the ABC transporter domain. 44-51 (GSSGCGKT) serves as a coordination point for ATP.

The protein belongs to the ABC transporter superfamily. Fe(3+) ion importer (TC 3.A.1.10) family. In terms of assembly, the complex is composed of two ATP-binding proteins (FbpC), two transmembrane proteins (FbpB) and a solute-binding protein (FbpA).

It is found in the cell inner membrane. The catalysed reaction is Fe(3+)(out) + ATP + H2O = Fe(3+)(in) + ADP + phosphate + H(+). Part of the ABC transporter complex FbpABC involved in Fe(3+) ions import. Responsible for energy coupling to the transport system. The sequence is that of Fe(3+) ions import ATP-binding protein FbpC 2 from Haemophilus influenzae (strain ATCC 51907 / DSM 11121 / KW20 / Rd).